Consider the following 248-residue polypeptide: MSPHKDFQSSSTPVPVCMENDPNCDLLRYLIALAIFIGLIAIFMFGCKAAMRLLTRKRNRDTTQSDTDVIYPRDDPRASRSHQNFGFMDPPPRYEQIFKRGGGTPSVITTREAPSVTRSTGDGSLPPSYEQAALNARRESRPQLPQGTLREVPLTAIDMEHPAMSTPSSTVLDMESEITNITNHAQACVHRYDASHANEVTRTAVAVTTESPAPAQSTSNALPELEAPEGGPPGYDTISLHNETVSTR.

A helical membrane pass occupies residues 30-50; sequence LIALAIFIGLIAIFMFGCKAA. Disordered regions lie at residues 59-91 and 208-248; these read NRDT…MDPP and TTES…VSTR. Polar residues-rich tracts occupy residues 210–220 and 239–248; these read ESPAPAQSTSN and SLHNETVSTR.

It is found in the membrane. This is an uncharacterized protein from Caenorhabditis elegans.